The primary structure comprises 129 residues: KIYTRCELAAAMKRYGLDNYQGYSLGNWVCAARYESNYNTQATNRNSDGSTDYGILQINSRWWCNDGKTPGTRNLCHISCSALMGADIAPSVRCAKKIVSDGNGMNAWVAWRKHCKGTDVSKWIKDCKL.

Residues 1–129 enclose the C-type lysozyme domain; sequence KIYTRCELAA…VSKWIKDCKL (129 aa). 4 disulfides stabilise this stretch: Cys-6–Cys-127, Cys-30–Cys-115, Cys-64–Cys-80, and Cys-76–Cys-94. Active-site residues include Glu-35 and Asp-52.

The protein belongs to the glycosyl hydrolase 22 family. Monomer.

It is found in the secreted. It carries out the reaction Hydrolysis of (1-&gt;4)-beta-linkages between N-acetylmuramic acid and N-acetyl-D-glucosamine residues in a peptidoglycan and between N-acetyl-D-glucosamine residues in chitodextrins.. Functionally, lysozymes have primarily a bacteriolytic function; those in tissues and body fluids are associated with the monocyte-macrophage system and enhance the activity of immunoagents. The chain is Lysozyme C (LYZ) from Crax fasciolata (Bare-faced curassow).